Here is a 483-residue protein sequence, read N- to C-terminus: Glutamyl-tRNA(Gln) amidotransferase subunit A (483 aa).

Active-site charge relay system residues include K76 and S151. S175 acts as the Acyl-ester intermediate in catalysis.

Belongs to the amidase family. GatA subfamily. As to quaternary structure, heterotrimer of A, B and C subunits.

The enzyme catalyses L-glutamyl-tRNA(Gln) + L-glutamine + ATP + H2O = L-glutaminyl-tRNA(Gln) + L-glutamate + ADP + phosphate + H(+). Functionally, allows the formation of correctly charged Gln-tRNA(Gln) through the transamidation of misacylated Glu-tRNA(Gln) in organisms which lack glutaminyl-tRNA synthetase. The reaction takes place in the presence of glutamine and ATP through an activated gamma-phospho-Glu-tRNA(Gln). The sequence is that of Glutamyl-tRNA(Gln) amidotransferase subunit A from Pseudomonas savastanoi pv. phaseolicola (strain 1448A / Race 6) (Pseudomonas syringae pv. phaseolicola (strain 1448A / Race 6)).